The following is a 1051-amino-acid chain: Lateral signaling target protein 2 homolog (1051 aa).

Disordered regions lie at residues P305–L440, G516–S552, H566–S703, and I837–A968. A compositionally biased stretch (low complexity) spans N319–T358. A compositionally biased stretch (basic and acidic residues) spans K360–N370. Residues N371–L391 show a composition bias toward polar residues. Composition is skewed to low complexity over residues S392–A401 and P409–A428. A compositionally biased stretch (polar residues) spans N518 to Q528. Low complexity-rich tracts occupy residues L533–P549 and P568–Q582. 2 positions are modified to phosphoserine: S569 and S570. The span at Q583 to P596 shows a compositional bias: polar residues. Over residues N597–N606 the composition is skewed to low complexity. Composition is skewed to basic residues over residues N607–H637 and H650–R672. Residues T692–S703 are compositionally biased toward polar residues. A compositionally biased stretch (low complexity) spans A840 to A852. At S861 the chain carries Phosphoserine. 2 stretches are compositionally biased toward low complexity: residues Q879–S924 and S937–P960. The FYVE-type zinc-finger motif lies at D965–V1025. Zn(2+) is bound by residues C971, C974, C987, C990, C995, C998, C1017, and C1020. Residues S1028 to S1051 are disordered.

It belongs to the lst-2 family.

Negative regulator of epidermal growth factor receptor (EGFR) signaling. This is Lateral signaling target protein 2 homolog from Drosophila mojavensis (Fruit fly).